The sequence spans 451 residues: F-box/LRR-repeat protein 13 (451 aa).

The 54-residue stretch at 17-70 (VDWISKLPDCLLCEVLLNLPTKDVVKTSVLSRRWRNLWKHVPGLDLDNTDFQEF) folds into the F-box domain. LRR repeat units follow at residues 128–155 (DDSYGSWEVQLPSSIYTCESLVSLKLCG), 177–202 (TKFADDMGLETLITKCPVLESLTIER), 224–251 (VADSDEGVVEDLVVSIDAPKLEYLRLSD), and 335–363 (CVEFYGYMWEMLPIFLESCPNLKTLVVKS). In terms of domain architecture, FBD spans 370–421 (GENIILPGPRRFLSSLEYVKIERPLKGEAMEMKLVSYLLENSTILKKLTLCL).

The sequence is that of F-box/LRR-repeat protein 13 (FBL13) from Arabidopsis thaliana (Mouse-ear cress).